The primary structure comprises 129 residues: MGKEATRVRRRERKNIASGVAHVNSSFNNTTITITDAQGNTIAWSSAGTMGFKGSRKSTPYAAQVAAEDVSKKAQEHGMRTLEVEVAGPGSGRESALRALQAAGFTVTSIRDVTTIPHNGCRPRKRRRV.

Belongs to the universal ribosomal protein uS11 family. In terms of assembly, part of the 30S ribosomal subunit. Interacts with proteins S7 and S18. Binds to IF-3.

Located on the platform of the 30S subunit, it bridges several disparate RNA helices of the 16S rRNA. Forms part of the Shine-Dalgarno cleft in the 70S ribosome. The protein is Small ribosomal subunit protein uS11 of Bradyrhizobium diazoefficiens (strain JCM 10833 / BCRC 13528 / IAM 13628 / NBRC 14792 / USDA 110).